Here is a 52-residue protein sequence, read N- to C-terminus: Rubredoxin (52 aa).

Methionine 1 carries the post-translational modification N-formylmethionine; partial. One can recognise a Rubredoxin-like domain in the interval 1-52 (MKKYGCLVCGYVYDPAKGDPDHGIAPGTAFEDLPADWVCPLCGVSKDEFEPL). 4 residues coordinate Fe cation: cysteine 6, cysteine 9, cysteine 39, and cysteine 42.

This sequence belongs to the rubredoxin family. Requires Fe(3+) as cofactor. Observed in four forms, with and without iron, and with and without formylation at Met-1.

Rubredoxin is a small nonheme, iron protein lacking acid-labile sulfide. Its single Fe, chelated to 4 Cys, functions as an electron acceptor and may also stabilize the conformation of the molecule. The chain is Rubredoxin from Heliobacterium mobile (Heliobacillus mobilis).